The primary structure comprises 362 residues: Aminomethyltransferase (362 aa).

This sequence belongs to the GcvT family. In terms of assembly, the glycine cleavage system is composed of four proteins: P, T, L and H.

The catalysed reaction is N(6)-[(R)-S(8)-aminomethyldihydrolipoyl]-L-lysyl-[protein] + (6S)-5,6,7,8-tetrahydrofolate = N(6)-[(R)-dihydrolipoyl]-L-lysyl-[protein] + (6R)-5,10-methylene-5,6,7,8-tetrahydrofolate + NH4(+). In terms of biological role, the glycine cleavage system catalyzes the degradation of glycine. This is Aminomethyltransferase from Chromobacterium violaceum (strain ATCC 12472 / DSM 30191 / JCM 1249 / CCUG 213 / NBRC 12614 / NCIMB 9131 / NCTC 9757 / MK).